The sequence spans 82 residues: Escargot/snail protein homolog (82 aa).

4 C2H2-type zinc fingers span residues 1 to 5 (HLQFH), 18 to 40 (FSCK…IRTH), 44 to 66 (CKCD…IRTH), and 72 to 82 (FSCQHCHRAFA).

This sequence belongs to the snail C2H2-type zinc-finger protein family.

The protein localises to the nucleus. This is Escargot/snail protein homolog from Bradysia coprophila (Dark-winged fungus gnat).